A 780-amino-acid polypeptide reads, in one-letter code: Pumilio domain-containing protein C4G8.03c (780 aa).

3 disordered regions span residues 1–29 (MVNR…LSSY), 298–330 (LSHF…LHSK), and 358–411 (NHHS…GKTV). Residues 298–307 (LSHFPDHLDP) show a composition bias toward basic and acidic residues. Low complexity predominate over residues 311 to 322 (PSPYQPSSLQPL). Positions 358-382 (NHHSSLSMDNDPTNVSTKNRNNQTV) are enriched in polar residues. One can recognise a PUM-HD domain in the interval 435–778 (EKSDDLSNLL…HILAKLTSST (344 aa)). Pumilio repeat units follow at residues 462 to 497 (GFLG…LFFP), 498 to 533 (EIRQ…SMLN), 534 to 569 (GIGE…SLLL), 570 to 606 (KIII…PLFL), 607 to 642 (SMEE…RLVN), 643 to 678 (SIIK…RIIE), 679 to 714 (KFFG…QMLQ), 715 to 752 (EFLS…LILR), and 753 to 780 (SISH…STSS).

The polypeptide is Pumilio domain-containing protein C4G8.03c (Schizosaccharomyces pombe (strain 972 / ATCC 24843) (Fission yeast)).